Here is a 398-residue protein sequence, read N- to C-terminus: Minor cardiolipin synthase ClsB (398 aa).

A helical transmembrane segment spans residues 3–23 (VFIVIMIIVVIFFALILLDIF). 2 consecutive PLD phosphodiesterase domains span residues 141-168 (MQKR…AEEY) and 311-338 (YQGF…DKRS).

Belongs to the phospholipase D family. Cardiolipin synthase subfamily.

The protein localises to the cell membrane. Functionally, involved in the biosynthesis of cardiolipin. The polypeptide is Minor cardiolipin synthase ClsB (clsB) (Bacillus subtilis (strain 168)).